Consider the following 671-residue polypeptide: Probable boron transporter 6 (671 aa).

The Cytoplasmic segment spans residues 1–37 (MKSEGESGPFQGILRDIEGRRKCYKQDWIRGIKTGIR). Residues 38–58 (ILAPTCYIFFASSLPVVAFGE) traverse the membrane as a helical segment. Residues 59-77 (QLSKHTGGALSAVETLAST) lie on the Extracellular side of the membrane. Residues 78–98 (SICGIIHAIFGGQPLLIVGVA) form a helical membrane-spanning segment. The Cytoplasmic portion of the chain corresponds to 99-123 (EPTIIMYTYLYSFCISRPDIGRELY). A helical membrane pass occupies residues 124–144 (LAWVAWVCVWTSVLLILLSIF). Residues 145–157 (NAGTIITRFTRIA) lie on the Extracellular side of the membrane. The chain crosses the membrane as a helical span at residues 158-178 (GELFGMLIAVLFLQEAIKGLI). Residues 179–195 (SEFHAPEIKNQETGKSH) lie on the Cytoplasmic side of the membrane. Residues 196–216 (FLLIYANGLLAVIFSLGLLIT) traverse the membrane as a helical segment. At 217-235 (ALKSRRAKSWKYGFGWLRS) the chain is on the extracellular side. Residues 236–256 (FIGDYGVPLMVLLWTALSYTV) traverse the membrane as a helical segment. Over 257–291 (PSEVLPSVPRRLFCPLPWEPASLYHWTVVKDMGKV) the chain is Cytoplasmic. Residues 292-312 (PIMYILAAFIPGVMIAGLYFF) form a helical membrane-spanning segment. Over 313–332 (DHSVASQMAQQKEFNLKNPS) the chain is Extracellular. The helical transmembrane segment at 333–353 (AYHYDIFLLGIITLICGLLGL) threads the bilayer. The Cytoplasmic segment spans residues 354–469 (PPSNGVLPQA…EQRVSNLLQS (116 aa)). A helical membrane pass occupies residues 470–490 (VLVGLTLLAVTVIKMIPSSVL). Over 491-557 (WGYFAYMAID…QLVYFLLCYG (67 aa)) the chain is Extracellular. A helical transmembrane segment spans residues 558-578 (MTWIPMAGIFFPALFFLLISI). Residues 579–671 (REHLLPKLFD…EEKHVTFEPH (93 aa)) are Cytoplasmic-facing.

It belongs to the anion exchanger (TC 2.A.31.3) family.

It localises to the membrane. Probable boron transporter. Boron is essential for maintaining the integrity of plants cell walls. The polypeptide is Probable boron transporter 6 (BOR6) (Arabidopsis thaliana (Mouse-ear cress)).